A 219-amino-acid chain; its full sequence is Ropporin-1-like protein (219 aa).

In terms of domain architecture, RIIa spans 17–54; sequence PELPDILKQFTKAAIRTQPHDLLQWSAAYFDSLSKGEP.

Belongs to the ropporin family. As to quaternary structure, component of axonemal radial spoke complexes.

Its subcellular location is the cell projection. It localises to the cilium. It is found in the flagellum. Functionally, functions as part of axonemal radial spoke complexes that play an important part in the motility of sperm and cilia. Important for male fertility. Involved in fibrous sheath integrity and sperm motility, plays a role in PKA-dependent signaling processes required for spermatozoa capacitation. This is Ropporin-1-like protein (ropn1l) from Xenopus laevis (African clawed frog).